A 368-amino-acid chain; its full sequence is Phosphoribosylaminoimidazole-succinocarboxamide synthase (368 aa).

It belongs to the SAICAR synthetase family.

The enzyme catalyses 5-amino-1-(5-phospho-D-ribosyl)imidazole-4-carboxylate + L-aspartate + ATP = (2S)-2-[5-amino-1-(5-phospho-beta-D-ribosyl)imidazole-4-carboxamido]succinate + ADP + phosphate + 2 H(+). The protein operates within purine metabolism; IMP biosynthesis via de novo pathway; 5-amino-1-(5-phospho-D-ribosyl)imidazole-4-carboxamide from 5-amino-1-(5-phospho-D-ribosyl)imidazole-4-carboxylate: step 1/2. This chain is Phosphoribosylaminoimidazole-succinocarboxamide synthase, found in Vibrio cholerae serotype O1 (strain ATCC 39315 / El Tor Inaba N16961).